Here is a 217-residue protein sequence, read N- to C-terminus: Uracil-DNA glycosylase (217 aa).

Residue Asp62 is the Proton acceptor of the active site.

This sequence belongs to the uracil-DNA glycosylase (UDG) superfamily. UNG family.

It is found in the cytoplasm. It carries out the reaction Hydrolyzes single-stranded DNA or mismatched double-stranded DNA and polynucleotides, releasing free uracil.. Excises uracil residues from the DNA which can arise as a result of misincorporation of dUMP residues by DNA polymerase or due to deamination of cytosine. The polypeptide is Uracil-DNA glycosylase (Streptococcus pyogenes serotype M49 (strain NZ131)).